Here is a 206-residue protein sequence, read N- to C-terminus: MAKESTTIDVGEPSTVTKSSSHVVKDAKKKGFVAVASRGGAKRGLAIFDFLLRLAAIAVTIGAASVMYTAEETLPFFTQFLQFQAGYDDLPAFQYFVIAVAVVASYLVLSLPFSIVSIVRPHAVAPRLILLICDTLVVTLNTSAAAAAASITYLAHNGNQSTNWLPICQQFGDFCQNVSTAVVADSIAILFFIVLIIISAIALKRH.

Ala-2 carries the N-acetylalanine modification. At 2 to 43 (AKESTTIDVGEPSTVTKSSSHVVKDAKKKGFVAVASRGGAKR) the chain is on the cytoplasmic side. The chain crosses the membrane as a helical span at residues 44–64 (GLAIFDFLLRLAAIAVTIGAA). At 65 to 95 (SVMYTAEETLPFFTQFLQFQAGYDDLPAFQY) the chain is on the extracellular side. Residues 96–116 (FVIAVAVVASYLVLSLPFSIV) traverse the membrane as a helical segment. The Cytoplasmic segment spans residues 117–127 (SIVRPHAVAPR). The helical transmembrane segment at 128 to 148 (LILLICDTLVVTLNTSAAAAA) threads the bilayer. Over 149 to 180 (ASITYLAHNGNQSTNWLPICQQFGDFCQNVST) the chain is Extracellular. Residues Asn-159 and Asn-177 are each glycosylated (N-linked (GlcNAc...) asparagine). A helical transmembrane segment spans residues 181 to 201 (AVVADSIAILFFIVLIIISAI). Topologically, residues 202–206 (ALKRH) are cytoplasmic.

The protein belongs to the Casparian strip membrane proteins (CASP) family. As to quaternary structure, homodimer and heterodimers with other CASP proteins. Interacts with CASP2, CASP3, CASP4 and CASP5.

The protein resides in the cell membrane. Functionally, regulates membrane-cell wall junctions and localized cell wall deposition. Required for establishment of the Casparian strip membrane domain (CSD) and the subsequent formation of Casparian strips, a cell wall modification of the root endodermis that determines an apoplastic barrier between the intraorganismal apoplasm and the extraorganismal apoplasm and prevents lateral diffusion. The polypeptide is Casparian strip membrane protein 1 (CASP1) (Arabidopsis thaliana (Mouse-ear cress)).